Here is a 339-residue protein sequence, read N- to C-terminus: Anthranilate phosphoribosyltransferase (339 aa).

5-phospho-alpha-D-ribose 1-diphosphate-binding positions include glycine 78, 81 to 82 (GD), threonine 86, 88 to 91 (NAST), 106 to 114 (KHGNRSVTS), and serine 118. An anthranilate-binding site is contributed by glycine 78. Serine 90 contacts Mg(2+). Asparagine 109 serves as a coordination point for anthranilate. Arginine 164 is an anthranilate binding site. Mg(2+) contacts are provided by aspartate 225 and glutamate 226. The segment covering 248 to 265 (TVAPEDVGLDRADPKDVA) has biased composition (basic and acidic residues). Residues 248–271 (TVAPEDVGLDRADPKDVAGADPET) are disordered.

Belongs to the anthranilate phosphoribosyltransferase family. As to quaternary structure, homodimer. Requires Mg(2+) as cofactor.

The enzyme catalyses N-(5-phospho-beta-D-ribosyl)anthranilate + diphosphate = 5-phospho-alpha-D-ribose 1-diphosphate + anthranilate. Its pathway is amino-acid biosynthesis; L-tryptophan biosynthesis; L-tryptophan from chorismate: step 2/5. Catalyzes the transfer of the phosphoribosyl group of 5-phosphorylribose-1-pyrophosphate (PRPP) to anthranilate to yield N-(5'-phosphoribosyl)-anthranilate (PRA). This chain is Anthranilate phosphoribosyltransferase, found in Methanopyrus kandleri (strain AV19 / DSM 6324 / JCM 9639 / NBRC 100938).